A 273-amino-acid chain; its full sequence is MSGDKLLSELGYKLGRTIGEGSYSKVKVATSKKYKGTVAIKVVDRRRAPPDFVNKFLPRELSILRGVRHPHIVHVFEFIEVCNGKLYIVMEAAATDLLQAVQRNGRIPGSQARELFSQIAGAVRYLHDHHLVHRDLKCENVLLSPDERRVKITDFGFGRQAHGYPDLSTTYCGSAAYASPEVLLGIPYDPKKYDVWSLGVVLYVMVTGCMPFDDSDIAGLPRRQKRGVLYPDGLELSERCKSLIAELLQFSPSARPSAGQVARNGWLRAGDSG.

Residues tyrosine 12–leucine 267 enclose the Protein kinase domain. Residues isoleucine 18–valine 26 and lysine 41 contribute to the ATP site. Residue aspartate 135 is the Proton acceptor of the active site.

It belongs to the protein kinase superfamily. CAMK Ser/Thr protein kinase family. In terms of assembly, microtubule inner protein component of sperm flagellar doublet microtubules. Interacts with HSP90; this interaction stabilizes and activates TSSK6. Interacts with the heat shock proteins HSPCB, HSPA8 and HSPA1A. These interactions appear to be required for TSSK6 kinase activity. Interacts with TSACC; this interaction is direct and recruits TSACC to HSP90, which is essential for kinase activity. It depends on Mg(2+) as a cofactor. Post-translationally, autophosphorylated. In terms of processing, ubiquitinated; HSP90 activity negatively regulates ubiquitination and degradation. In terms of tissue distribution, expressed in the testis, localized to the heads of elongating spermatids.

Its subcellular location is the cytoplasm. It localises to the cytoskeleton. It is found in the flagellum axoneme. The protein resides in the nucleus. It catalyses the reaction L-seryl-[protein] + ATP = O-phospho-L-seryl-[protein] + ADP + H(+). The enzyme catalyses L-threonyl-[protein] + ATP = O-phospho-L-threonyl-[protein] + ADP + H(+). Serine/threonine-protein kinase component of the sperm flagellar doublet microtubules. May act as a regulator of sperm motility by mediating phosphorylation of sperm doublet microtubule proteins. Plays a role in DNA condensation during postmeiotic chromatin remodeling and histone-to-protamine transition during spermatogenesis. This Mus musculus (Mouse) protein is Testis-specific serine/threonine-protein kinase 6.